A 281-amino-acid polypeptide reads, in one-letter code: Bis(5'-nucleosyl)-tetraphosphatase, symmetrical (281 aa).

It belongs to the Ap4A hydrolase family.

The catalysed reaction is P(1),P(4)-bis(5'-adenosyl) tetraphosphate + H2O = 2 ADP + 2 H(+). In terms of biological role, hydrolyzes diadenosine 5',5'''-P1,P4-tetraphosphate to yield ADP. The chain is Bis(5'-nucleosyl)-tetraphosphatase, symmetrical from Delftia acidovorans (strain DSM 14801 / SPH-1).